We begin with the raw amino-acid sequence, 54 residues long: Synaptosomal-associated protein 25 (54 aa).

The protein belongs to the SNAP-25 family. As to quaternary structure, part of the SNARE core complex containing SNAP25, VAMP2 and STX1A; this complex binds CPLX1. Found in a complex containing SYT1, SV2B and syntaxin-1. Found in a ternary complex with STX1A and VAMP8. Interacts with HSC70 and with SYT9, forming a complex with DNAJC5. The interaction with SYT9 is inhibited in presence of calcium. Isoform 1 and isoform 2 interact with BLOC1S6. Interacts with CENPF. Interacts with EQTN. Interacts with HGS. Interacts with KCNB1 (via N-terminus); reduces the voltage-dependent potassium channel KCNB1 activity in pancreatic beta cells. Interacts with OTOF. Interacts with RIMS1. Interacts with SNAPIN. Interacts with STXBP6. Interacts with TRIM9. Interacts with ZDHHC13 (via ANK repeats). Interacts with ZDHHC17 (via ANK repeats). Associates with the BLOC-1 complex. Interacts with PLCL1 (via C2 domain). Interacts with PRRT2; this interaction may impair the formation of the SNARE complex. Interacts with alpha-synuclein/SNCA. Interacts with PRPH2. Interacts with ROM1. Interacts with STX3. The N-terminus is blocked.

Its subcellular location is the cytoplasm. It localises to the perinuclear region. It is found in the cell membrane. The protein localises to the synapse. The protein resides in the synaptosome. Its subcellular location is the photoreceptor inner segment. Its function is as follows. t-SNARE involved in the molecular regulation of neurotransmitter release. May play an important role in the synaptic function of specific neuronal systems. Associates with proteins involved in vesicle docking and membrane fusion. Regulates plasma membrane recycling through its interaction with CENPF. Modulates the gating characteristics of the delayed rectifier voltage-dependent potassium channel KCNB1 in pancreatic beta cells. The polypeptide is Synaptosomal-associated protein 25 (SNAP25) (Oryctolagus cuniculus (Rabbit)).